A 149-amino-acid polypeptide reads, in one-letter code: Arginine repressor (149 aa).

This sequence belongs to the ArgR family.

The protein localises to the cytoplasm. The protein operates within amino-acid biosynthesis; L-arginine biosynthesis [regulation]. Functionally, regulates arginine biosynthesis genes. The polypeptide is Arginine repressor (Geobacillus kaustophilus (strain HTA426)).